The primary structure comprises 213 residues: Small ribosomal subunit protein uS5 (213 aa).

The disordered stretch occupies residues 1 to 42; sequence MSERDRNGGRSADNNRNDRNERGGRNDRGGRNDRRNNQQDER. Residues 45-108 enclose the S5 DRBM domain; that stretch reads YIERVVTINR…EEARKNFFRV (64 aa).

Belongs to the universal ribosomal protein uS5 family. Part of the 30S ribosomal subunit. Contacts proteins S4 and S8.

Its function is as follows. With S4 and S12 plays an important role in translational accuracy. Functionally, located at the back of the 30S subunit body where it stabilizes the conformation of the head with respect to the body. This chain is Small ribosomal subunit protein uS5, found in Corynebacterium urealyticum (strain ATCC 43042 / DSM 7109).